A 602-amino-acid chain; its full sequence is MSTPLDHIRNFSIVAHIDHGKSTLADRLIQLTGGLDTREMKDQVLDSMDIERERGITIKAQTVRLSYKAKNGEDYVLNLIDTPGHVDFAYEVSRSLAACEGSLLVVDASQGVEAQTLANVYQAIDNNHEIVVVLNKIDLPAAEPERVKQQIEEVIGIDASDAVEISAKTGLGIEDVLEAIVNKLPAPKEGDRNAPLKAMLVDSWYDSYLGVIVLVRVIDGVLKKGQTIRMMGTGAKYPVERTGVFTPKMVQVDDLGPGELGFITASIKEVADTRVGDTITEDRRPTENILSGFKPAQPVVFCGLFPVDAADFEDLRGAMGKLRLNDASFSFEMETSAALGFGFRCGFLGLLHLEIIQERLEREFNLDLITTAPSVVYRLNMTDGTHKELHNPADMPDVVKIASIEEPWIKATIMTPDDYLGAIMKLCQERRGIQIDLTYVGPRAMITYDLPLNEVVFDFYDRLKSISKGYASFDYNLSDYREGDLVKMSILVNEEPVDALSMLVHRSAAEKRGRALCEKLKELIPQHMFKIPIQAAIGGRIVARETISALRKDVTAKCYGGDVTRKRKLLEKQKESKKRMRQFGKVEIPQEAFIQALKMGDD.

In terms of domain architecture, tr-type G spans 6–188; sequence DHIRNFSIVA…AIVNKLPAPK (183 aa). Residues 18 to 23 and 135 to 138 each bind GTP; these read DHGKST and NKID.

Belongs to the TRAFAC class translation factor GTPase superfamily. Classic translation factor GTPase family. LepA subfamily.

It is found in the cell inner membrane. The catalysed reaction is GTP + H2O = GDP + phosphate + H(+). Its function is as follows. Required for accurate and efficient protein synthesis under certain stress conditions. May act as a fidelity factor of the translation reaction, by catalyzing a one-codon backward translocation of tRNAs on improperly translocated ribosomes. Back-translocation proceeds from a post-translocation (POST) complex to a pre-translocation (PRE) complex, thus giving elongation factor G a second chance to translocate the tRNAs correctly. Binds to ribosomes in a GTP-dependent manner. This Brucella abortus (strain 2308) protein is Elongation factor 4.